A 259-amino-acid chain; its full sequence is Thiazole synthase (259 aa).

Lys98 serves as the catalytic Schiff-base intermediate with DXP. Residues Gly159, 185-186, and 207-208 contribute to the 1-deoxy-D-xylulose 5-phosphate site; these read AG and NS.

The protein belongs to the ThiG family. In terms of assembly, homotetramer. Forms heterodimers with either ThiH or ThiS.

Its subcellular location is the cytoplasm. It carries out the reaction [ThiS sulfur-carrier protein]-C-terminal-Gly-aminoethanethioate + 2-iminoacetate + 1-deoxy-D-xylulose 5-phosphate = [ThiS sulfur-carrier protein]-C-terminal Gly-Gly + 2-[(2R,5Z)-2-carboxy-4-methylthiazol-5(2H)-ylidene]ethyl phosphate + 2 H2O + H(+). It participates in cofactor biosynthesis; thiamine diphosphate biosynthesis. Catalyzes the rearrangement of 1-deoxy-D-xylulose 5-phosphate (DXP) to produce the thiazole phosphate moiety of thiamine. Sulfur is provided by the thiocarboxylate moiety of the carrier protein ThiS. In vitro, sulfur can be provided by H(2)S. This is Thiazole synthase from Chlorobium phaeovibrioides (strain DSM 265 / 1930) (Prosthecochloris vibrioformis (strain DSM 265)).